A 403-amino-acid chain; its full sequence is Putative F-box/LRR-repeat protein At5g38386 (403 aa).

An F-box domain is found at 1-47 (MDHLSNLPDELLCHIMSFLTTKEAALISVLSKRWRNLIAFVPNLDIF). LRR repeat units follow at residues 64-91 (IRQL…SLCC), 93-119 (GGSY…DLSM), 131-156 (VFEN…VMNH), 175-203 (LKTL…SYSD), 243-274 (YLYF…SIKS), and 275-300 (VESR…VLEA).

In Arabidopsis thaliana (Mouse-ear cress), this protein is Putative F-box/LRR-repeat protein At5g38386.